A 352-amino-acid polypeptide reads, in one-letter code: Biotin synthase (352 aa).

The 219-residue stretch at 44–262 (NRVQVSTLLS…LAVARILMPQ (219 aa)) folds into the Radical SAM core domain. [4Fe-4S] cluster contacts are provided by cysteine 59, cysteine 63, and cysteine 66. [2Fe-2S] cluster is bound by residues cysteine 103, cysteine 134, cysteine 194, and arginine 266.

It belongs to the radical SAM superfamily. Biotin synthase family. As to quaternary structure, homodimer. [4Fe-4S] cluster serves as cofactor. The cofactor is [2Fe-2S] cluster.

The enzyme catalyses (4R,5S)-dethiobiotin + (sulfur carrier)-SH + 2 reduced [2Fe-2S]-[ferredoxin] + 2 S-adenosyl-L-methionine = (sulfur carrier)-H + biotin + 2 5'-deoxyadenosine + 2 L-methionine + 2 oxidized [2Fe-2S]-[ferredoxin]. The protein operates within cofactor biosynthesis; biotin biosynthesis; biotin from 7,8-diaminononanoate: step 2/2. Its function is as follows. Catalyzes the conversion of dethiobiotin (DTB) to biotin by the insertion of a sulfur atom into dethiobiotin via a radical-based mechanism. The sequence is that of Biotin synthase from Pseudomonas syringae pv. tomato (strain ATCC BAA-871 / DC3000).